A 331-amino-acid chain; its full sequence is Glucan endo-1,3-beta-glucosidase, acidic isoform GL161 (331 aa).

The signal sequence occupies residues 1-9 (MCSIQIIGA). Residue Gln-10 is modified to Pyrrolidone carboxylic acid. 2 N-linked (GlcNAc...) asparagine glycosylation sites follow: Asn-55 and Asn-75. Glu-244 (nucleophile) is an active-site residue.

It belongs to the glycosyl hydrolase 17 family. As to expression, is expressed primarily in epidermal cell of healthy plant, and following induction by ethylene, accumulates in mesophyll cells.

It localises to the secreted. The protein resides in the extracellular space. The enzyme catalyses Hydrolysis of (1-&gt;3)-beta-D-glucosidic linkages in (1-&gt;3)-beta-D-glucans.. Is thought to be an important plant defense-related product against fungal pathogens. The protein is Glucan endo-1,3-beta-glucosidase, acidic isoform GL161 of Nicotiana tabacum (Common tobacco).